The following is a 501-amino-acid chain: Lysine--tRNA ligase (501 aa).

Residues E411 and E418 each contribute to the Mg(2+) site.

This sequence belongs to the class-II aminoacyl-tRNA synthetase family. Homodimer. Mg(2+) is required as a cofactor.

It is found in the cytoplasm. It carries out the reaction tRNA(Lys) + L-lysine + ATP = L-lysyl-tRNA(Lys) + AMP + diphosphate. This chain is Lysine--tRNA ligase, found in Thiobacillus denitrificans (strain ATCC 25259 / T1).